The following is a 314-amino-acid chain: Tetraacyldisaccharide 4'-kinase (314 aa).

ATP is bound at residue Y54–T61.

Belongs to the LpxK family.

It catalyses the reaction a lipid A disaccharide + ATP = a lipid IVA + ADP + H(+). Its pathway is glycolipid biosynthesis; lipid IV(A) biosynthesis; lipid IV(A) from (3R)-3-hydroxytetradecanoyl-[acyl-carrier-protein] and UDP-N-acetyl-alpha-D-glucosamine: step 6/6. In terms of biological role, transfers the gamma-phosphate of ATP to the 4'-position of a tetraacyldisaccharide 1-phosphate intermediate (termed DS-1-P) to form tetraacyldisaccharide 1,4'-bis-phosphate (lipid IVA). This chain is Tetraacyldisaccharide 4'-kinase, found in Pelagibacter ubique (strain HTCC1062).